A 631-amino-acid polypeptide reads, in one-letter code: Chaperone protein DnaK (631 aa).

T197 is subject to Phosphothreonine; by autocatalysis. The interval 600 to 631 (KKENPQAADAQQGNTANAGKKKDDDVIDAEVE) is disordered.

Belongs to the heat shock protein 70 family.

In terms of biological role, acts as a chaperone. The sequence is that of Chaperone protein DnaK from Wolinella succinogenes (strain ATCC 29543 / DSM 1740 / CCUG 13145 / JCM 31913 / LMG 7466 / NCTC 11488 / FDC 602W) (Vibrio succinogenes).